A 1025-amino-acid chain; its full sequence is DNA polymerase (1025 aa).

It belongs to the DNA polymerase type-B family.

The catalysed reaction is DNA(n) + a 2'-deoxyribonucleoside 5'-triphosphate = DNA(n+1) + diphosphate. In terms of biological role, replicates the viral genome. Host DNA polymerases cannot substitute for the viral enzyme in this process. This chain is DNA polymerase, found in Noctuidae (owlet moths).